The following is a 269-amino-acid chain: 2-dehydro-3-deoxyphosphooctonate aldolase (269 aa).

Belongs to the KdsA family.

The protein resides in the cytoplasm. It carries out the reaction D-arabinose 5-phosphate + phosphoenolpyruvate + H2O = 3-deoxy-alpha-D-manno-2-octulosonate-8-phosphate + phosphate. It participates in carbohydrate biosynthesis; 3-deoxy-D-manno-octulosonate biosynthesis; 3-deoxy-D-manno-octulosonate from D-ribulose 5-phosphate: step 2/3. Its pathway is bacterial outer membrane biogenesis; lipopolysaccharide biosynthesis. The polypeptide is 2-dehydro-3-deoxyphosphooctonate aldolase (Chlamydia felis (strain Fe/C-56) (Chlamydophila felis)).